The primary structure comprises 571 residues: Calcium-dependent protein kinase 16 (571 aa).

Residues 1-74 form a disordered region; it reads MGLCFSSAAK…TRHTPPHGKV (74 aa). Gly2 carries the N-myristoyl glycine lipid modification. The S-palmitoyl cysteine moiety is linked to residue Cys4. Over residues 63 to 72 the composition is skewed to basic residues; that stretch reads TPTRHTPPHG. The Protein kinase domain maps to 108–368; that stretch reads YTIGKLLGHG…AAQALSHPWV (261 aa). ATP-binding positions include 114–122 and Lys137; that span reads LGHGQFGYT. Asp234 functions as the Proton acceptor in the catalytic mechanism. Residue Ser274 is modified to Phosphoserine. The interval 374-404 is autoinhibitory domain; the sequence is ASEIPIDISVLNNMRQFVKFSRLKQFALRAL. 4 EF-hand domains span residues 411 to 446, 448 to 483, 490 to 525, and 528 to 555; these read EELA…DHPW, LKDA…VNQL, KWQQ…KGSI, and LLEE…ASIK. Positions 424, 426, 428, 435, 461, 463, 465, 472, 503, 505, 507, 514, 533, 535, 537, and 539 each coordinate Ca(2+). Ser541 is modified (phosphoserine). Glu544 is a binding site for Ca(2+).

It belongs to the protein kinase superfamily. Ser/Thr protein kinase family. CDPK subfamily.

The protein resides in the cell membrane. The protein localises to the nucleus. It catalyses the reaction L-seryl-[protein] + ATP = O-phospho-L-seryl-[protein] + ADP + H(+). The enzyme catalyses L-threonyl-[protein] + ATP = O-phospho-L-threonyl-[protein] + ADP + H(+). Its activity is regulated as follows. Activated by calcium. Autophosphorylation may play an important role in the regulation of the kinase activity. In terms of biological role, may play a role in signal transduction pathways that involve calcium as a second messenger. The chain is Calcium-dependent protein kinase 16 (CPK16) from Arabidopsis thaliana (Mouse-ear cress).